The primary structure comprises 118 residues: D-dopachrome decarboxylase-B (118 aa).

Proline 2 carries the post-translational modification N-acetylproline.

The protein belongs to the MIF family. In terms of assembly, homotrimer.

It localises to the cytoplasm. The enzyme catalyses D-dopachrome + H(+) = 5,6-dihydroxyindole + CO2. Tautomerization of D-dopachrome with decarboxylation to give 5,6-dihydroxyindole (DHI). This chain is D-dopachrome decarboxylase-B (ddt-b), found in Xenopus laevis (African clawed frog).